A 393-amino-acid polypeptide reads, in one-letter code: MRRHLRASLWILCLATMAFSILAAVNTSPKPTLTSAFSGKAGTTAVKANKTTGELLPMVINTWNFTAANVLAWRILKQSKGGLRQTRNAVVEGCSKCEKLQCDRTVGYGGSPDELGETTLDAMVMDGATMDVGAVAGLRRIKDAIKVARHVLEHTQHTMLVGDAASAFANAMGFESESLVTPESKDMWLQWTAENCQPNFWKNVHPDPKVSCGPYKPRPTPLTRWKEDRARNEYEIGRKNHDTIGMIAIDVESNIHAGTSTNGARHKIPGRVGDSPIPGAGAYADNEVGAAVATGDGDVMMRFLPSLLAVETMRAGKPPAEAAQEGLRRILKHHKDFMGALIAVDRLGNYGAACYGLAEFPFMVSSPAGADGPTRLETVKCIGGQDKVNIVAL.

A signal peptide spans 1–23; that stretch reads MRRHLRASLWILCLATMAFSILA. Residues asparagine 49 and asparagine 64 are each glycosylated (N-linked (GlcNAc...) asparagine). Cystine bridges form between cysteine 97-cysteine 102 and cysteine 196-cysteine 212. Threonine 243 functions as the Nucleophile in the catalytic mechanism. Residues 271–274 and 294–297 contribute to the substrate site; these read RVGD and TGDG. Cysteine 354 and cysteine 381 are joined by a disulfide.

This sequence belongs to the Ntn-hydrolase family. As to quaternary structure, heterotetramer of two alpha and two beta chains arranged as a dimer of alpha/beta heterodimers. Post-translationally, cleaved into an alpha and beta chain by autocatalysis; this activates the enzyme. The N-terminal residue of the beta subunit is responsible for the nucleophile hydrolase activity.

It catalyses the reaction N(4)-(beta-N-acetyl-D-glucosaminyl)-L-asparagine + H2O = N-acetyl-beta-D-glucosaminylamine + L-aspartate + H(+). Its function is as follows. Cleaves the GlcNAc-Asn bond which joins oligosaccharides to the peptide of asparagine-linked glycoproteins. This Drosophila melanogaster (Fruit fly) protein is Putative N(4)-(beta-N-acetylglucosaminyl)-L-asparaginase CG1827.